A 27-amino-acid chain; its full sequence is Dermaseptin-like peptide (27 aa).

Its function is as follows. Has antimicrobial activity against the Gram-positive bacterium M.luteus and the yeast C.albicans. Has hemolytic activity on human and duck erythrocytes. The protein is Dermaseptin-like peptide of Schistosoma mansoni (Blood fluke).